We begin with the raw amino-acid sequence, 143 residues long: Peptide methionine sulfoxide reductase MsrB (143 aa).

A MsrB domain is found at 5 to 127 (NEELKKKLTP…NSAALRFIPK (123 aa)). Residue C116 is the Nucleophile of the active site.

It belongs to the MsrB Met sulfoxide reductase family.

It carries out the reaction L-methionyl-[protein] + [thioredoxin]-disulfide + H2O = L-methionyl-(R)-S-oxide-[protein] + [thioredoxin]-dithiol. The protein is Peptide methionine sulfoxide reductase MsrB of Halalkalibacterium halodurans (strain ATCC BAA-125 / DSM 18197 / FERM 7344 / JCM 9153 / C-125) (Bacillus halodurans).